Here is a 263-residue protein sequence, read N- to C-terminus: Alpha-tubulin N-acetyltransferase 2 (263 aa).

In terms of domain architecture, N-acetyltransferase spans 1-181; it reads MEIAFDLSSI…NKYAVFPNFF (181 aa). 115-128 serves as a coordination point for acetyl-CoA; the sequence is FFIVPTEQRSGNGF. Disordered regions lie at residues 191-224 and 236-263; these read TPRQTKRASRASSAVSSHTTSRNTSPIGRNRPRH and FPRGRSVIDPNSPAGFKLTRDQRHEPIW. Low complexity predominate over residues 200–212; it reads RASSAVSSHTTSR. A compositionally biased stretch (basic and acidic residues) spans 253-263; that stretch reads LTRDQRHEPIW.

The protein belongs to the acetyltransferase ATAT1 family.

It carries out the reaction L-lysyl-[alpha-tubulin] + acetyl-CoA = N(6)-acetyl-L-lysyl-[alpha-tubulin] + CoA + H(+). Specifically acetylates 'Lys-40' in alpha-tubulin/mec-12 on the lumenal side of microtubules. Promotes microtubule destabilization and accelerates microtubule dynamics; this activity may be independent of acetylation activity. Acetylates alpha-tubulin with a slow enzymatic rate, due to a catalytic site that is not optimized for acetyl transfer. Enters the microtubule through each end and diffuses quickly throughout the lumen of microtubules. Acetylates only long/old microtubules because of its slow acetylation rate since it does not have time to act on dynamically unstable microtubules before the enzyme is released. Required for the maintenance of touch receptor neurons and possibly other type of neurons involved in locomotion. The polypeptide is Alpha-tubulin N-acetyltransferase 2 (atat-2) (Caenorhabditis briggsae).